We begin with the raw amino-acid sequence, 395 residues long: Major capsid protein P3 (395 aa).

As to quaternary structure, homotrimer.

The protein resides in the virion. Major capsid protein self-assembles to form an icosahedral capsid with a pseudo T=25 symmetry, about 66 nm in diameter, and consisting of 240 capsid proteins trimers. The capsid encapsulates an inner membrane and the genomic dsDNA genome. The major coat protein P3 and two assembly factors (P10 and P17) are needed during the assembly of the virus particle inside the host cell, when the capsid protein multimers are capable of enclosing the host-derived membrane, containing the virus-encoded membrane-associated proteins. In Acinetobacter calcoaceticus (Arthrobacter siderocapsulatus), this protein is Major capsid protein P3 (III).